The chain runs to 204 residues: ATP-dependent Clp protease proteolytic subunit (204 aa).

Catalysis depends on Ser101, which acts as the Nucleophile. His126 is a catalytic residue.

The protein belongs to the peptidase S14 family. Component of the chloroplastic Clp protease core complex.

The protein localises to the plastid. The protein resides in the chloroplast stroma. It catalyses the reaction Hydrolysis of proteins to small peptides in the presence of ATP and magnesium. alpha-casein is the usual test substrate. In the absence of ATP, only oligopeptides shorter than five residues are hydrolyzed (such as succinyl-Leu-Tyr-|-NHMec, and Leu-Tyr-Leu-|-Tyr-Trp, in which cleavage of the -Tyr-|-Leu- and -Tyr-|-Trp bonds also occurs).. Cleaves peptides in various proteins in a process that requires ATP hydrolysis. Has a chymotrypsin-like activity. Plays a major role in the degradation of misfolded proteins. This chain is ATP-dependent Clp protease proteolytic subunit, found in Phalaenopsis aphrodite subsp. formosana (Moth orchid).